Reading from the N-terminus, the 394-residue chain is MLVFIFLAVRLSSENESSSQTNDCAYFMRQCLTDTDGCKQSWRSMEDACLVSGDSCKINNPLPCNLSIQSLVEKHFQFKGCLCTDDLHCTVNKIFGKKCTNKTDSMKKDNKYKRNLTTPLYHDTGFKQMQSCLEVTEACVGDVVCNAQLALYLKACTANGNLCDVKHCQAAIRFFYQNMPFNTAQMLAFCDCAQSDIPCQQSKETLHSKPCALNVVPPPTCLSVIHTCRNDELCRTYYRTFQTECWPHVAGKCREDETCISMLGKQDLTCSGSDSCRAAYLGTFGTVLQVPCACRSITQGEEPLCMAFQHMLHSKSCFNYPTPNVKDISSYERKHSKEITLTGFNSPFSGELIYVVVCMVVTSGILSLVMLKLRIPSKKRDPAPIEIAGAVIIQ.

The N-terminal stretch at 1-19 (MLVFIFLAVRLSSENESSS) is a signal peptide. The Extracellular segment spans residues 20–350 (QTNDCAYFMR…LTGFNSPFSG (331 aa)). N-linked (GlcNAc...) asparagine glycosylation is found at Asn65, Asn101, and Asn115. 11 cysteine pairs are disulfide-bonded: Cys132/Cys190, Cys139/Cys145, Cys156/Cys168, Cys163/Cys211, Cys192/Cys199, Cys221/Cys292, Cys228/Cys234, Cys245/Cys276, Cys253/Cys259, Cys270/Cys317, and Cys294/Cys305. The interval 150–229 (ALYLKACTAN…TCLSVIHTCR (80 aa)) is required for interaction with GDF15. Residues 351–371 (ELIYVVVCMVVTSGILSLVML) traverse the membrane as a helical segment. At 372–394 (KLRIPSKKRDPAPIEIAGAVIIQ) the chain is on the cytoplasmic side.

Belongs to the GDNFR family. As to quaternary structure, interacts (via the extracellular domain) with GDF15 and RET; receptor of GDF15, mediates cellular signaling through interaction with RET after GDF15-binding. Interaction with RET requires previous GDF15-binding. Cleaved and inactivated by MMP14, inhibiting the GDF15-GFRAL aversive response. In terms of tissue distribution, expressed in the brainstem, restricted to cells in the area postrema and the immediately adjacent region of the nucleus tractus solitarius. Detected at low levels in testis.

Its subcellular location is the cell membrane. Functionally, brainstem-restricted receptor for GDF15 hormone, which triggers an aversive response, characterized by nausea, vomiting, and/or loss of appetite in response to various stresses. The aversive response is both required to reduce continuing exposure to those stresses at the time of exposure and to promote avoidance behavior in the future. The GDF15-GFRAL aversive response is triggered by stresses, such as anticancer drugs (camptothecin or cisplatin), cancers or drugs such as metformin. Upon interaction with its ligand, GDF15, mediates the GDF15-induced autophosphorylation and activation of the RET tyrosine kinase receptor, leading to activation of MAPK- and AKT- signaling pathways. Ligand-binding activates GFRAL-expressing neurons localized in the area postrema and nucleus tractus solitarius of the brainstem. The GDF15-GFRAL signal induces expression of genes involved in metabolism, such as lipid metabolism in adipose tissues. The sequence is that of GDNF family receptor alpha-like from Rattus norvegicus (Rat).